We begin with the raw amino-acid sequence, 357 residues long: UDP-N-acetylglucosamine--N-acetylmuramyl-(pentapeptide) pyrophosphoryl-undecaprenol N-acetylglucosamine transferase (357 aa).

Residues 12 to 14 (TGG), Asn124, Arg162, Ser190, Ile243, 262 to 267 (ALTVAE), and Gln288 each bind UDP-N-acetyl-alpha-D-glucosamine.

This sequence belongs to the glycosyltransferase 28 family. MurG subfamily.

It localises to the cell inner membrane. The enzyme catalyses di-trans,octa-cis-undecaprenyl diphospho-N-acetyl-alpha-D-muramoyl-L-alanyl-D-glutamyl-meso-2,6-diaminopimeloyl-D-alanyl-D-alanine + UDP-N-acetyl-alpha-D-glucosamine = di-trans,octa-cis-undecaprenyl diphospho-[N-acetyl-alpha-D-glucosaminyl-(1-&gt;4)]-N-acetyl-alpha-D-muramoyl-L-alanyl-D-glutamyl-meso-2,6-diaminopimeloyl-D-alanyl-D-alanine + UDP + H(+). Its pathway is cell wall biogenesis; peptidoglycan biosynthesis. Its function is as follows. Cell wall formation. Catalyzes the transfer of a GlcNAc subunit on undecaprenyl-pyrophosphoryl-MurNAc-pentapeptide (lipid intermediate I) to form undecaprenyl-pyrophosphoryl-MurNAc-(pentapeptide)GlcNAc (lipid intermediate II). This Alcanivorax borkumensis (strain ATCC 700651 / DSM 11573 / NCIMB 13689 / SK2) protein is UDP-N-acetylglucosamine--N-acetylmuramyl-(pentapeptide) pyrophosphoryl-undecaprenol N-acetylglucosamine transferase.